The chain runs to 1134 residues: Translation initiation factor IF-2 (1134 aa).

Disordered stretches follow at residues 55–465 (AQKS…HIIG) and 491–524 (LARP…QRQR). 5 stretches are compositionally biased toward polar residues: residues 56 to 65 (QKSSNSSSPP), 83 to 105 (SPPT…SSLK), 137 to 147 (PSISKNNSLKV), 208 to 234 (QIKQ…IQTN), and 251 to 264 (VQSQ…NNNL). 2 stretches are compositionally biased toward basic and acidic residues: residues 391–403 (KRGD…KKDG) and 438–450 (PDWD…EALR). Composition is skewed to basic residues over residues 495–504 (GKPKASKKSG) and 511–524 (LRKR…QRQR). The region spanning 626–798 (RRPPVVTVMG…ILLVTEVEDL (173 aa)) is the tr-type G domain. A G1 region spans residues 635-642 (GHVDHGKT). 635–642 (GHVDHGKT) contacts GTP. Positions 660-664 (GITQH) are G2. Residues 685–688 (DTPG) are G3. GTP contacts are provided by residues 685–689 (DTPGH) and 739–742 (NKID). A G4 region spans residues 739–742 (NKID). Positions 775–777 (SAI) are G5.

Belongs to the TRAFAC class translation factor GTPase superfamily. Classic translation factor GTPase family. IF-2 subfamily.

It localises to the cytoplasm. Functionally, one of the essential components for the initiation of protein synthesis. Protects formylmethionyl-tRNA from spontaneous hydrolysis and promotes its binding to the 30S ribosomal subunits. Also involved in the hydrolysis of GTP during the formation of the 70S ribosomal complex. This is Translation initiation factor IF-2 from Prochlorococcus marinus (strain SARG / CCMP1375 / SS120).